A 212-amino-acid polypeptide reads, in one-letter code: N-(5'-phosphoribosyl)anthranilate isomerase (212 aa).

It belongs to the TrpF family.

The catalysed reaction is N-(5-phospho-beta-D-ribosyl)anthranilate = 1-(2-carboxyphenylamino)-1-deoxy-D-ribulose 5-phosphate. The protein operates within amino-acid biosynthesis; L-tryptophan biosynthesis; L-tryptophan from chorismate: step 3/5. The protein is N-(5'-phosphoribosyl)anthranilate isomerase of Microcystis aeruginosa (strain NIES-843 / IAM M-2473).